We begin with the raw amino-acid sequence, 125 residues long: Protein ApaG (125 aa).

One can recognise an ApaG domain in the interval 1-125; the sequence is MIDSPRVCVQ…FRLAVPTFIH (125 aa).

The sequence is that of Protein ApaG from Enterobacter sp. (strain 638).